An 822-amino-acid chain; its full sequence is Fibroblast growth factor receptor 4 (822 aa).

A signal peptide spans 1–35; it reads MGVQKDSRDIRWNRTTRPLALLLCGLLAFSALSCA. N-linked (GlcNAc...) asparagine glycosylation is found at Asn-13, Asn-72, and Asn-125. At 36 to 388 the chain is on the extracellular side; it reads RTLPEGRKAN…AEGPETRYTD (353 aa). 3 Ig-like C2-type domains span residues 39-129, 157-259, and 268-368; these read PEGR…FTIS, PPYS…YLLD, and PILQ…AWLT. Cys-69 and Cys-114 form a disulfide bridge. The tract at residues 136–166 is disordered; the sequence is SGDDDDEDHGREDSAGDMGEDPPYSTSYRAP. Cys-191 and Cys-243 form a disulfide bridge. N-linked (GlcNAc...) asparagine glycosylation is found at Asn-240, Asn-277, Asn-309, Asn-330, and Asn-341. Cys-290 and Cys-352 are disulfide-bonded. Residues 389–409 traverse the membrane as a helical segment; the sequence is IIIYTSGSLALLMAAVIVVLC. The Cytoplasmic segment spans residues 410-822; the sequence is RMQLPPTKTH…HHTTTSMVGT (413 aa). The Protein kinase domain maps to 486-774; that stretch reads LVLGKPLGEG…ILATVAEEYL (289 aa). Residues 492–500 and Lys-522 each bind ATP; that span reads LGEGCFGQV. Asp-631 serves as the catalytic Proton acceptor. Phosphotyrosine; by autocatalysis occurs at positions 661, 662, and 773.

The protein belongs to the protein kinase superfamily. Tyr protein kinase family. Fibroblast growth factor receptor subfamily. Post-translationally, ubiquitinated. Subject to proteasomal degradation when not fully glycosylated. Autophosphorylated. Binding of FGF family members together with heparan sulfate proteoglycan or heparin promotes receptor dimerization and autophosphorylation on tyrosine residues. Autophosphorylation occurs in trans between the two FGFR molecules present in the dimer.

Its subcellular location is the cell membrane. The protein localises to the endosome. It is found in the endoplasmic reticulum. It catalyses the reaction L-tyrosyl-[protein] + ATP = O-phospho-L-tyrosyl-[protein] + ADP + H(+). Its activity is regulated as follows. Present in an inactive conformation in the absence of bound ligand. Ligand binding leads to dimerization and activation by autophosphorylation on tyrosine residues. Functionally, tyrosine-protein kinase that acts as a cell-surface receptor for fibroblast growth factors and plays a role in the regulation of cell proliferation, differentiation and migration, and in regulation of lipid metabolism, bile acid biosynthesis, glucose uptake, vitamin D metabolism and phosphate homeostasis. Required for normal down-regulation of the expression of CYP7A1, the rate-limiting enzyme in bile acid synthesis, in response to FGF19. Phosphorylates PLCG1 and FRS2. Ligand binding leads to the activation of several signaling cascades. Activation of PLCG1 leads to the production of the cellular signaling molecules diacylglycerol and inositol 1,4,5-trisphosphate. Phosphorylation of FRS2 triggers recruitment of GRB2, GAB1, PIK3R1 and SOS1, and mediates activation of RAS, MAPK1/ERK2, MAPK3/ERK1 and the MAP kinase signaling pathway, as well as of the AKT1 signaling pathway. This Pleurodeles waltl (Iberian ribbed newt) protein is Fibroblast growth factor receptor 4 (FGFR4).